Here is a 274-residue protein sequence, read N- to C-terminus: tRNA-cytidine(32) 2-sulfurtransferase (274 aa).

Positions 40–45 (SGGKDS) match the PP-loop motif motif. [4Fe-4S] cluster is bound by residues cysteine 115, cysteine 118, and cysteine 206.

Belongs to the TtcA family. As to quaternary structure, homodimer. Requires Mg(2+) as cofactor. The cofactor is [4Fe-4S] cluster.

It is found in the cytoplasm. It carries out the reaction cytidine(32) in tRNA + S-sulfanyl-L-cysteinyl-[cysteine desulfurase] + AH2 + ATP = 2-thiocytidine(32) in tRNA + L-cysteinyl-[cysteine desulfurase] + A + AMP + diphosphate + H(+). It functions in the pathway tRNA modification. Its function is as follows. Catalyzes the ATP-dependent 2-thiolation of cytidine in position 32 of tRNA, to form 2-thiocytidine (s(2)C32). The sulfur atoms are provided by the cysteine/cysteine desulfurase (IscS) system. The protein is tRNA-cytidine(32) 2-sulfurtransferase of Pseudomonas paraeruginosa (strain DSM 24068 / PA7) (Pseudomonas aeruginosa (strain PA7)).